The chain runs to 148 residues: Large ribosomal subunit protein bL9 (148 aa).

It belongs to the bacterial ribosomal protein bL9 family.

Functionally, binds to the 23S rRNA. The chain is Large ribosomal subunit protein bL9 from Staphylococcus aureus (strain bovine RF122 / ET3-1).